The following is a 577-amino-acid chain: MNKLYIGNLNESVTPADLEKVFAEHKISYSGQFLVKSGYAFVDCPDEHWAMKAIETFSGKVELQGKRLEIEHSVPKKQRSRKIQIRNIPPQLRWEVLDSLLAQYGTVENCEQVNTESETAVVNVTYSNREQTRQAIMKLNGHQLENHALKVSYIPDEQITQGPENGRRGGFGSRGQPRQGSPVAAGAPAKQQPVDIPLRLLVPTQYVGAIIGKEGATIRNITKQTQSKIDVHRKENAGAAEKAISVHSTPEGCSSACKMILEIMHKEAKDTKTADEVPLKILAHNNFVGRLIGKEGRNLKKVEQDTETKITISSLQDLTLYNPERTITVKGAIENCCRAEQEIMKKVREAYENDVAAMSLQSHLIPGLNLAAVGLFPASSSAVPPPPSSVTGAAPYSSFMQAPEQEMVQVFIPAQAVGAIIGKKGQHIKQLSRFASASIKIAPPETPDSKVRMVVITGPPEAQFKAQGRIYGKLKEENFFGPKEEVKLETHIRVPASAAGRVIGKGGKTVNELQNLTAAEVVVPRDQTPDENDQVIVKIIGHFYASQMAQRKIRDILAQVKQQHQKGQSNLAQARRK.

RRM domains lie at 2–75 (NKLY…HSVP) and 81–156 (RKIQ…YIPD). A phosphoserine mark is found at S12 and S73. A disordered region spans residues 156–190 (DEQITQGPENGRRGGFGSRGQPRQGSPVAAGAPAK). Position 181 is a phosphoserine; by MTOR (S181). 4 KH domains span residues 195-260 (DIPL…CKMI), 276-343 (EVPL…EQEI), 405-470 (QEMV…QGRI), and 487-553 (KLET…QRKI). The tract at residues 312–323 (ISSLQDLTLYNP) is sufficient for nuclear export. The segment at 485–495 (EVKLETHIRVP) is sufficient for nuclear export. T528 carries the post-translational modification Phosphothreonine.

Belongs to the RRM IMP/VICKZ family. In terms of assembly, can form homodimers and heterodimers with IGF2BP1 and IGF2BP3. Component of the coding region determinant (CRD)-mediated complex, composed of DHX9, HNRNPU, IGF2BP1, SYNCRIP and YBX1. Identified in a mRNP complex, at least composed of DHX9, DDX3X, ELAVL1, HNRNPU, IGF2BP1, ILF3, PABPC1, PCBP2, PTBP2, STAU1, STAU2, SYNCRIP and YBX1. Associates with mRNP complex. Interacts with FMR1. Component of a multisubunit autoregulatory RNP complex (ARC), at least composed of IGF2BP1, PABPC1 and CSDE1. Interacts with AGO1 and AGO2. Interacts, through domains KH3 and KH4, with PABPC1 in an RNA-independent manner. Component of a TAU mRNP complex, at least composed of IGF2BP1, ELAVL4 and G3BP. Interacts with ELAVL4 in an RNA-dependent manner. Associates with microtubules and polysomes. Interacts with ELAVL1 and MATR3. In terms of processing, phosphorylated at Ser-181 by mTORC2 cotranslationally, promoting binding to the 3'-UTR of IGF2 mRNA. As to expression, expressed in zygotes and blastocysts (at protein level). Expressed in brain, skeletal muscle, trophoblasts of placenta, oocytes and spermatogonia (at protein level). Expressed in testis and ovary. Following colon injury, expressed in the wound bed mesenchyme during the first phase of repair, probably by colonic mesenchymal stem cells (at protein level).

It is found in the nucleus. The protein localises to the cytoplasm. It localises to the perinuclear region. Its subcellular location is the P-body. The protein resides in the stress granule. It is found in the cell projection. The protein localises to the lamellipodium. It localises to the dendrite. Its subcellular location is the dendritic spine. The protein resides in the growth cone. It is found in the filopodium. The protein localises to the axon. Its function is as follows. RNA-binding factor that recruits target transcripts to cytoplasmic protein-RNA complexes (mRNPs). This transcript 'caging' into mRNPs allows mRNA transport and transient storage. It also modulates the rate and location at which target transcripts encounter the translational apparatus and shields them from endonuclease attacks or microRNA-mediated degradation. Preferentially binds to N6-methyladenosine (m6A)-containing mRNAs and increases their stability. Regulates localized beta-actin/ACTB mRNA translation, a crucial process for cell polarity, cell migration and neurite outgrowth. Co-transcriptionally associates with the ACTB mRNA in the nucleus. This binding involves a conserved 54-nucleotide element in the ACTB mRNA 3'-UTR, known as the 'zipcode'. The RNP thus formed is exported to the cytoplasm, binds to a motor protein and is transported along the cytoskeleton to the cell periphery. During transport, prevents ACTB mRNA from being translated into protein. When the RNP complex reaches its destination near the plasma membrane, IGF2BP1 is phosphorylated. This releases the mRNA, allowing ribosomal 40S and 60S subunits to assemble and initiate ACTB protein synthesis. Monomeric ACTB then assembles into the subcortical actin cytoskeleton. During neuronal development, key regulator of neurite outgrowth, growth cone guidance and neuronal cell migration, presumably through the spatiotemporal fine tuning of protein synthesis, such as that of ACTB. May regulate mRNA transport to activated synapses. Binds to the 3'-UTR of CD44 mRNA and stabilizes it, hence promotes cell adhesion and invadopodia formation in cancer cells. Binds to the oncofetal H19 transcript and regulates its localization. Binds to and stabilizes BTRC/FBW1A mRNA. Binds to the adenine-rich autoregulatory sequence (ARS) located in PABPC1 mRNA and represses its translation. PABPC1 mRNA-binding is stimulated by PABPC1 protein. Prevents BTRC/FBW1A mRNA degradation by disrupting microRNA-dependent interaction with AGO2. During cellular stress, such as oxidative stress or heat shock, stabilizes target mRNAs that are recruited to stress granules, including CD44, IGF2, MAPK4, MYC, PTEN, RAPGEF2 and RPS6KA5 transcripts. Interacts with GAP43 transcript and transports it to axons. Binds to the 3'-UTR of IGF2 mRNA by a mechanism of cooperative and sequential dimerization and regulates IGF2 mRNA subcellular localization and translation. Binds to MYC mRNA, in the coding region instability determinant (CRD) of the open reading frame (ORF), hence prevents MYC cleavage by endonucleases and possibly microRNA targeting to MYC-CRD. Binding to MYC mRNA is enhanced by m6A-modification of the CRD. Binds to and stabilizes ABCB1/MDR-1 mRNA. Binds to the neuron-specific TAU mRNA and regulates its localization. Plays a direct role in the transport and translation of transcripts required for axonal regeneration in adult sensory neurons. During interstinal wound repair, interacts with and stabilizes PTGS2 transcript. PTGS2 mRNA stabilization may be crucial for colonic mucosal wound healing. The chain is Insulin-like growth factor 2 mRNA-binding protein 1 (Igf2bp1) from Mus musculus (Mouse).